We begin with the raw amino-acid sequence, 250 residues long: ATP synthase subunit a (250 aa).

6 helical membrane-spanning segments follow: residues 26 to 46, 84 to 104, 114 to 134, 143 to 163, 193 to 213, and 216 to 236; these read FTNASLFMAASAAVAAGFLYF, FFPLVFSLFMFVLTANLLGMF, IIVTFALAILVISTVLIYGFY, VFVPSGVPGILLPLVVAIEII, FVASLGALGAVGVGGAVLPLI, and VALTGLEFLVAFLQAYVFAVL.

The protein belongs to the ATPase A chain family. As to quaternary structure, F-type ATPases have 2 components, CF(1) - the catalytic core - and CF(0) - the membrane proton channel. CF(1) has five subunits: alpha(3), beta(3), gamma(1), delta(1), epsilon(1). CF(0) has three main subunits: a(1), b(2) and c(9-12). The alpha and beta chains form an alternating ring which encloses part of the gamma chain. CF(1) is attached to CF(0) by a central stalk formed by the gamma and epsilon chains, while a peripheral stalk is formed by the delta and b chains.

It is found in the cell inner membrane. Key component of the proton channel; it plays a direct role in the translocation of protons across the membrane. The sequence is that of ATP synthase subunit a from Rhizobium etli (strain ATCC 51251 / DSM 11541 / JCM 21823 / NBRC 15573 / CFN 42).